Consider the following 137-residue polypeptide: Crustacean hyperglycemic hormones (137 aa).

Residues 1–28 (MVSFRTMWSLVVVVVVVAASLGSSGVHG) form the signal peptide. At Gln64 the chain carries Pyrrolidone carboxylic acid. Phe66 is modified (D-phenylalanine; in form CHH-II). 3 disulfide bridges follow: Cys70–Cys106, Cys86–Cys102, and Cys89–Cys115. Val135 bears the Valine amide mark.

It belongs to the arthropod CHH/MIH/GIH/VIH hormone family. Produced by the medulla terminalis X-organ in the eyestalks and transported to the sinus gland where they are stored and released.

The protein localises to the secreted. Its function is as follows. Hormone found in the sinus gland of isopods and decapods which controls the blood sugar level. Has a secretagogue action over the amylase released from the midgut gland. May act as a stress hormone and may be involved in the control of molting and reproduction. The polypeptide is Crustacean hyperglycemic hormones (Procambarus clarkii (Red swamp crayfish)).